Here is a 687-residue protein sequence, read N- to C-terminus: Polyphosphate kinase (687 aa).

Asparagine 45 serves as a coordination point for ATP. Mg(2+) contacts are provided by arginine 375 and arginine 405. The active-site Phosphohistidine intermediate is histidine 435. 3 residues coordinate ATP: tyrosine 472, arginine 568, and histidine 596.

It belongs to the polyphosphate kinase 1 (PPK1) family. Requires Mg(2+) as cofactor. In terms of processing, an intermediate of this reaction is the autophosphorylated ppk in which a phosphate is covalently linked to a histidine residue through a N-P bond.

It carries out the reaction [phosphate](n) + ATP = [phosphate](n+1) + ADP. Its function is as follows. Catalyzes the reversible transfer of the terminal phosphate of ATP to form a long-chain polyphosphate (polyP). The protein is Polyphosphate kinase of Burkholderia vietnamiensis (strain G4 / LMG 22486) (Burkholderia cepacia (strain R1808)).